Consider the following 43-residue polypeptide: MALLDLQAMDTPAEDSFGELRTGSQVSLLVCEYSSLSVVLCTP.

The N-terminal stretch at 1-21 is a signal peptide; sequence MALLDLQAMDTPAEDSFGELR. 2 cross-links (lanthionine (Ser-Cys)) span residues 24–31 and 34–41; these read SQVSLLVC and SSLSVVLC. 2 positions are modified to 2,3-didehydroalanine (Ser): S27 and S37.

It belongs to the lanthionine-containing morphogen protein family. Post-translationally, maturation involves the enzymatic conversion of Ser into dehydrated AA and the formation of thioether bonds with cysteine. This is followed by membrane translocation and cleavage of the modified precursor.

In terms of biological role, lanthionine-containing peptide devoid of antibiotic properties, involved in the formation of aerial mycelium. Suggested to self-assemble at air-water interfaces, thus providing a film of surfactant through which nascent aerial hyphae can emerge. The aerial hyphae differentiate further into spores. The sequence is that of Lanthionine-containing peptide SapB (ramS) from Streptomyces griseus.